The chain runs to 362 residues: Beta-ketoacyl-[acyl-carrier-protein] synthase III 2 (362 aa).

Catalysis depends on residues cysteine 113 and histidine 251. The ACP-binding stretch occupies residues 252 to 256 (QANIR). Residue asparagine 281 is part of the active site.

Belongs to the thiolase-like superfamily. FabH family. In terms of assembly, homodimer.

It localises to the cytoplasm. The catalysed reaction is malonyl-[ACP] + acetyl-CoA + H(+) = 3-oxobutanoyl-[ACP] + CO2 + CoA. The protein operates within lipid metabolism; fatty acid biosynthesis. In terms of biological role, catalyzes the condensation reaction of fatty acid synthesis by the addition to an acyl acceptor of two carbons from malonyl-ACP. Catalyzes the first condensation reaction which initiates fatty acid synthesis and may therefore play a role in governing the total rate of fatty acid production. Possesses both acetoacetyl-ACP synthase and acetyl transacylase activities. Its substrate specificity determines the biosynthesis of branched-chain and/or straight-chain of fatty acids. The polypeptide is Beta-ketoacyl-[acyl-carrier-protein] synthase III 2 (Vibrio vulnificus (strain YJ016)).